Consider the following 501-residue polypeptide: WD repeat-containing protein wdr-5.3 (501 aa).

3 disordered regions span residues 1 to 35 (MNPE…LESN), 58 to 85 (PIGV…YQSH), and 155 to 197 (KSAE…ITKK). Residues 22–35 (PNQQSLQSRMLESN) are compositionally biased toward polar residues. A compositionally biased stretch (polar residues) spans 167-177 (SITTKPTSTIQ). 7 WD repeats span residues 211–241 (GHTK…KVWN), 253–283 (SHQL…KIFD), 295–325 (GHTN…RVWD), 337–367 (AHSD…RVWD), 381–410 (DHAP…KLWD), 422–455 (GHKN…LVWS), and 467–499 (GHTT…RIWR).

The protein belongs to the WD repeat WDR5/wds family.

In terms of biological role, not required for methylation of histone H3 'Lys-4'. This chain is WD repeat-containing protein wdr-5.3 (wdr-5.3), found in Caenorhabditis elegans.